A 227-amino-acid chain; its full sequence is Cytochrome c oxidase subunit 2 (227 aa).

The Mitochondrial intermembrane portion of the chain corresponds to 1 to 14 (MAHAAQMGLQDATS). A helical transmembrane segment spans residues 15–45 (PIMEELISFHDHALMIIFLISFLVLYALFLT). Residues 46 to 59 (LTTKLTNTNITDAQ) are Mitochondrial matrix-facing. Residues 60-87 (EMETVWTILPAIILVLIALPSLRILYLT) form a helical membrane-spanning segment. Residues 88 to 227 (DEINDPSFTI…IFEMGPVFTL (140 aa)) lie on the Mitochondrial intermembrane side of the membrane. Positions 161, 196, 198, 200, 204, and 207 each coordinate Cu cation. Glutamate 198 serves as a coordination point for Mg(2+).

The protein belongs to the cytochrome c oxidase subunit 2 family. Component of the cytochrome c oxidase (complex IV, CIV), a multisubunit enzyme composed of 14 subunits. The complex is composed of a catalytic core of 3 subunits MT-CO1, MT-CO2 and MT-CO3, encoded in the mitochondrial DNA, and 11 supernumerary subunits COX4I, COX5A, COX5B, COX6A, COX6B, COX6C, COX7A, COX7B, COX7C, COX8 and NDUFA4, which are encoded in the nuclear genome. The complex exists as a monomer or a dimer and forms supercomplexes (SCs) in the inner mitochondrial membrane with NADH-ubiquinone oxidoreductase (complex I, CI) and ubiquinol-cytochrome c oxidoreductase (cytochrome b-c1 complex, complex III, CIII), resulting in different assemblies (supercomplex SCI(1)III(2)IV(1) and megacomplex MCI(2)III(2)IV(2)). Found in a complex with TMEM177, COA6, COX18, COX20, SCO1 and SCO2. Interacts with TMEM177 in a COX20-dependent manner. Interacts with COX20. Interacts with COX16. The cofactor is Cu cation.

The protein localises to the mitochondrion inner membrane. The catalysed reaction is 4 Fe(II)-[cytochrome c] + O2 + 8 H(+)(in) = 4 Fe(III)-[cytochrome c] + 2 H2O + 4 H(+)(out). Its function is as follows. Component of the cytochrome c oxidase, the last enzyme in the mitochondrial electron transport chain which drives oxidative phosphorylation. The respiratory chain contains 3 multisubunit complexes succinate dehydrogenase (complex II, CII), ubiquinol-cytochrome c oxidoreductase (cytochrome b-c1 complex, complex III, CIII) and cytochrome c oxidase (complex IV, CIV), that cooperate to transfer electrons derived from NADH and succinate to molecular oxygen, creating an electrochemical gradient over the inner membrane that drives transmembrane transport and the ATP synthase. Cytochrome c oxidase is the component of the respiratory chain that catalyzes the reduction of oxygen to water. Electrons originating from reduced cytochrome c in the intermembrane space (IMS) are transferred via the dinuclear copper A center (CU(A)) of subunit 2 and heme A of subunit 1 to the active site in subunit 1, a binuclear center (BNC) formed by heme A3 and copper B (CU(B)). The BNC reduces molecular oxygen to 2 water molecules using 4 electrons from cytochrome c in the IMS and 4 protons from the mitochondrial matrix. This Symphalangus syndactylus (Siamang) protein is Cytochrome c oxidase subunit 2 (MT-CO2).